The sequence spans 638 residues: Threonine--tRNA ligase (638 aa).

The region spanning 1 to 61 (MPVVTLPDGS…EADAEVALVT (61 aa)) is the TGS domain. The tract at residues 242–533 (DHRKLGKALD…LTEHYAGQYP (292 aa)) is catalytic. Cys333, His384, and His510 together coordinate Zn(2+).

This sequence belongs to the class-II aminoacyl-tRNA synthetase family. As to quaternary structure, homodimer. Requires Zn(2+) as cofactor.

It is found in the cytoplasm. The enzyme catalyses tRNA(Thr) + L-threonine + ATP = L-threonyl-tRNA(Thr) + AMP + diphosphate + H(+). Functionally, catalyzes the attachment of threonine to tRNA(Thr) in a two-step reaction: L-threonine is first activated by ATP to form Thr-AMP and then transferred to the acceptor end of tRNA(Thr). Also edits incorrectly charged L-seryl-tRNA(Thr). This chain is Threonine--tRNA ligase, found in Methylococcus capsulatus (strain ATCC 33009 / NCIMB 11132 / Bath).